Reading from the N-terminus, the 1102-residue chain is Voltage-gated delayed rectifier potassium channel KCNH8 (1102 aa).

Residues 1–225 (MPVMKGLLAP…HFSTFKAGWD (225 aa)) lie on the Cytoplasmic side of the membrane. The PAS domain occupies 18–90 (IATRFDGTHS…LQIEKSLEEK (73 aa)). The region spanning 93 to 145 (FKGEIMFYKKNGAPFWCLLDIVPIKNEKGDVVLFLASFKDITDTKVKITSEDK) is the PAC domain. Residues 142–151 (SEDKKEDRTK) show a composition bias toward basic and acidic residues. Positions 142–162 (SEDKKEDRTKGRSRAGSHFDS) are disordered. A helical transmembrane segment spans residues 226–246 (WLILLATFYVAVTVPYNVCFI). At 247 to 255 (GNEDLSTTR) the chain is on the extracellular side. A helical membrane pass occupies residues 256-276 (STTVSDIAVEILFIIDIILNF). The Cytoplasmic segment spans residues 277–298 (RTTYVSKSGQVIFEARSICIHY). Residues 299-319 (VTTWFIIDLIAALPFDLLYAF) traverse the membrane as a helical segment. An N-linked (GlcNAc...) asparagine glycan is attached at Asn-320. The Extracellular segment spans residues 320–327 (NVTVVSLV). The chain crosses the membrane as a helical; Voltage-sensor span at residues 328–348 (HLLKTVRLLRLLRLLQKLDRY). Residues 349–357 (SQHSTIVLT) lie on the Cytoplasmic side of the membrane. A helical transmembrane segment spans residues 358-378 (LLMSMFALLAHWMACIWYVIG). At 379-419 (KMEREDNSLLKWEVGWLHELGKRLESPYYGNNTLGGPSIRS) the chain is on the extracellular side. Residue Asn-409 is glycosylated (N-linked (GlcNAc...) asparagine). The pore-forming intramembrane region spans 420-440 (AYIAALYFTLSSLTSVGFGNV). A Selectivity filter motif is present at residues 434–439 (SVGFGN). The Extracellular portion of the chain corresponds to 441 to 448 (SANTDAEK). A helical membrane pass occupies residues 449-469 (IFSICTMLIGALMHALVFGNV). Over 470–1102 (TAIIQRMYSR…DVKDSKAINV (633 aa)) the chain is Cytoplasmic. Residues 551 to 668 (LFECASRGCL…HKFVEDIQHD (118 aa)) are cNMP-binding domain. Residues 684 to 693 (RLSNKSTVSQ) are compositionally biased toward polar residues. 3 disordered regions span residues 684–743 (RLSN…KKTG), 764–841 (HSPI…PEPR), and 960–991 (LVGSSPQRTEAHEQNPADSELHHSPNLDYSPS). Over residues 710–723 (VEDEEEEEVEEEET) the composition is skewed to acidic residues. A compositionally biased stretch (polar residues) spans 724 to 737 (TSLSPIYTRGSSVS). Basic and acidic residues predominate over residues 968-984 (TEAHEQNPADSELHHSP).

This sequence belongs to the potassium channel family. H (Eag) (TC 1.A.1.20) subfamily. Kv12.1/KCNH8 sub-subfamily. In terms of assembly, the potassium channel is probably composed of a homo- or heterotetrameric complex of pore-forming alpha subunits that can associate with modulating beta subunits.

The protein resides in the membrane. The enzyme catalyses K(+)(in) = K(+)(out). Its function is as follows. Pore-forming (alpha) subunit of a voltage-gated delayed rectifier potassium channel that mediates outward-rectifying potassium currents. Elicits a slowly activating, non-inactivating and slowly deactivation outwards potassium current at depolarizating voltages from -30 mV to +50mV. Shows no obvious change in the activation rate from different holding potentials. Activation is strongly dependent on the pH of the external solution. The sequence is that of Voltage-gated delayed rectifier potassium channel KCNH8 from Mus musculus (Mouse).